Consider the following 112-residue polypeptide: MAKNQNQGQIAEHSARRYLEQRGLTFVEQNVRYRFGEIDIVMKDGSDWVFVEVKYRSPSQYGGAVNALSQAQTLRIRKAASHYIQINRIDAICRFDVVAVDPDAMQWIRDAF.

The protein belongs to the UPF0102 family.

The chain is UPF0102 protein Spea_0251 from Shewanella pealeana (strain ATCC 700345 / ANG-SQ1).